The sequence spans 801 residues: Mitochondrial intermediate peptidase (801 aa).

A mitochondrion-targeting transit peptide spans 1-41 (MKDQLLVPLRRRPWTCQKCLQRLQLPRHQTRRSFETAASPF). H564 lines the Zn(2+) pocket. The active site involves E565. Residues H568 and H571 each coordinate Zn(2+).

Belongs to the peptidase M3 family. The cofactor is Zn(2+).

The protein localises to the mitochondrion matrix. The catalysed reaction is Release of an N-terminal octapeptide as second stage of processing of some proteins imported into the mitochondrion.. Cleaves proteins, imported into the mitochondrion, to their mature size. While most mitochondrial precursor proteins are processed to the mature form in one step by mitochondrial processing peptidase (MPP), the sequential cleavage by MIP of an octapeptide after initial processing by MPP is a required step for a subgroup of nuclear-encoded precursor proteins destined for the matrix or the inner membrane. This chain is Mitochondrial intermediate peptidase (oct1), found in Aspergillus fumigatus (strain ATCC MYA-4609 / CBS 101355 / FGSC A1100 / Af293) (Neosartorya fumigata).